A 227-amino-acid polypeptide reads, in one-letter code: Homeobox-leucine zipper protein ATHB-54 (227 aa).

Positions 65-124 (EITKKRKLTPIQLRLLEESFEEEKRLEPDRKLWLAEKLGLQPSQVAVWFQNRRARYKTKQ) form a DNA-binding region, homeobox. A leucine-zipper region spans residues 125-153 (LEHDCDSLKASYAKLKTDWDILFVQNQTL). The disordered stretch occupies residues 175–198 (IERKRLGEEGSSVKSDNTQYSEEE).

The protein belongs to the HD-ZIP homeobox family. Class I subfamily. As to expression, predominantly expressed in flowers and siliques.

It localises to the nucleus. Its function is as follows. Probable transcription factor. The chain is Homeobox-leucine zipper protein ATHB-54 (ATHB-54) from Arabidopsis thaliana (Mouse-ear cress).